The following is a 279-amino-acid chain: Putative cysteine-rich repeat secretory protein 22 (279 aa).

The N-terminal stretch at Met-1–Ser-31 is a signal peptide. Gnk2-homologous domains are found at residues Tyr-44–Ser-146 and Tyr-152–Phe-276.

Belongs to the cysteine-rich repeat secretory protein family.

The protein localises to the secreted. In Arabidopsis thaliana (Mouse-ear cress), this protein is Putative cysteine-rich repeat secretory protein 22 (CRRSP22).